The primary structure comprises 303 residues: Proteasome subunit beta (303 aa).

Positions methionine 1 to glycine 67 are cleaved as a propeptide — removed in mature form; by autocatalysis. Threonine 68 serves as the catalytic Nucleophile.

The protein belongs to the peptidase T1B family. In terms of assembly, the 20S proteasome core is composed of 14 alpha and 14 beta subunits that assemble into four stacked heptameric rings, resulting in a barrel-shaped structure. The two inner rings, each composed of seven catalytic beta subunits, are sandwiched by two outer rings, each composed of seven alpha subunits. The catalytic chamber with the active sites is on the inside of the barrel. Has a gated structure, the ends of the cylinder being occluded by the N-termini of the alpha-subunits. Is capped by the proteasome-associated ATPase, ARC.

The protein localises to the cytoplasm. The enzyme catalyses Cleavage of peptide bonds with very broad specificity.. It functions in the pathway protein degradation; proteasomal Pup-dependent pathway. Its activity is regulated as follows. The formation of the proteasomal ATPase ARC-20S proteasome complex, likely via the docking of the C-termini of ARC into the intersubunit pockets in the alpha-rings, may trigger opening of the gate for substrate entry. Interconversion between the open-gate and close-gate conformations leads to a dynamic regulation of the 20S proteasome proteolysis activity. Its function is as follows. Component of the proteasome core, a large protease complex with broad specificity involved in protein degradation. The sequence is that of Proteasome subunit beta from Mycolicibacterium paratuberculosis (strain ATCC BAA-968 / K-10) (Mycobacterium paratuberculosis).